A 484-amino-acid chain; its full sequence is tRNA sulfurtransferase (484 aa).

A THUMP domain is found at 63 to 167; that stretch reads DVFADRLACI…QDKLYMVERR (105 aa). ATP is bound by residues 185–186, lysine 267, glycine 289, and glutamine 298; that span reads LI. Cysteine 346 and cysteine 458 are disulfide-bonded. Residues 406–484 enclose the Rhodanese domain; that stretch reads VASGEIIIDV…GYTNVKVYRP (79 aa). The Cysteine persulfide intermediate role is filled by cysteine 458.

It belongs to the ThiI family.

It localises to the cytoplasm. It catalyses the reaction [ThiI sulfur-carrier protein]-S-sulfanyl-L-cysteine + a uridine in tRNA + 2 reduced [2Fe-2S]-[ferredoxin] + ATP + H(+) = [ThiI sulfur-carrier protein]-L-cysteine + a 4-thiouridine in tRNA + 2 oxidized [2Fe-2S]-[ferredoxin] + AMP + diphosphate. The catalysed reaction is [ThiS sulfur-carrier protein]-C-terminal Gly-Gly-AMP + S-sulfanyl-L-cysteinyl-[cysteine desulfurase] + AH2 = [ThiS sulfur-carrier protein]-C-terminal-Gly-aminoethanethioate + L-cysteinyl-[cysteine desulfurase] + A + AMP + 2 H(+). It participates in cofactor biosynthesis; thiamine diphosphate biosynthesis. Catalyzes the ATP-dependent transfer of a sulfur to tRNA to produce 4-thiouridine in position 8 of tRNAs, which functions as a near-UV photosensor. Also catalyzes the transfer of sulfur to the sulfur carrier protein ThiS, forming ThiS-thiocarboxylate. This is a step in the synthesis of thiazole, in the thiamine biosynthesis pathway. The sulfur is donated as persulfide by IscS. The protein is tRNA sulfurtransferase of Shewanella frigidimarina (strain NCIMB 400).